A 132-amino-acid polypeptide reads, in one-letter code: D-ribose pyranase (132 aa).

The active-site Proton donor is histidine 20. Substrate contacts are provided by residues aspartate 28, histidine 99, and 121-123; that span reads YAN.

This sequence belongs to the RbsD / FucU family. RbsD subfamily. Homodecamer.

The protein localises to the cytoplasm. It carries out the reaction beta-D-ribopyranose = beta-D-ribofuranose. It participates in carbohydrate metabolism; D-ribose degradation; D-ribose 5-phosphate from beta-D-ribopyranose: step 1/2. Its function is as follows. Catalyzes the interconversion of beta-pyran and beta-furan forms of D-ribose. In Variovorax paradoxus (strain S110), this protein is D-ribose pyranase.